A 450-amino-acid polypeptide reads, in one-letter code: D-inositol 3-phosphate glycosyltransferase (450 aa).

His-21 provides a ligand contact to 1D-myo-inositol 3-phosphate. UDP-N-acetyl-alpha-D-glucosamine is bound by residues 27–28 (QP) and Gly-35. Residues 32-37 (DAGGMN), Lys-90, Tyr-123, Thr-147, and Arg-167 contribute to the 1D-myo-inositol 3-phosphate site. 3 residues coordinate UDP-N-acetyl-alpha-D-glucosamine: Arg-241, Lys-246, and Val-307. Residues Tyr-316, Arg-317, and Ala-319 each contribute to the Mg(2+) site. 2 residues coordinate UDP-N-acetyl-alpha-D-glucosamine: Glu-329 and Glu-337. Thr-343 is a Mg(2+) binding site.

Belongs to the glycosyltransferase group 1 family. MshA subfamily. As to quaternary structure, homodimer.

It catalyses the reaction 1D-myo-inositol 3-phosphate + UDP-N-acetyl-alpha-D-glucosamine = 1D-myo-inositol 2-acetamido-2-deoxy-alpha-D-glucopyranoside 3-phosphate + UDP + H(+). Catalyzes the transfer of a N-acetyl-glucosamine moiety to 1D-myo-inositol 3-phosphate to produce 1D-myo-inositol 2-acetamido-2-deoxy-glucopyranoside 3-phosphate in the mycothiol biosynthesis pathway. The chain is D-inositol 3-phosphate glycosyltransferase from Geodermatophilus obscurus (strain ATCC 25078 / DSM 43160 / JCM 3152 / CCUG 61914 / KCC A-0152 / KCTC 9177 / NBRC 13315 / NRRL B-3577 / G-20).